A 351-amino-acid polypeptide reads, in one-letter code: C-X-C chemokine receptor type 1 (351 aa).

Over 1–44 (MAEAEYFIWTNPEGDFEKEFGNITGMLPTGDYFIPCKRVPITNR) the chain is Extracellular. Asn22 carries an N-linked (GlcNAc...) asparagine glycan. The chain crosses the membrane as a helical span at residues 45-71 (QALVVFYALVSLLSLLGNSLVMLVILY). Residues 72–80 (RRRTRSVMD) lie on the Cytoplasmic side of the membrane. Residues 81–101 (VYVLNLAIADLLFSLTLPFLA) traverse the membrane as a helical segment. Topologically, residues 102 to 116 (VSKLKGWIFGTPLCK) are extracellular. Cys115 and Cys192 are joined by a disulfide. Residues 117-138 (MVSLLKEFNFFSGILLLACISV) form a helical membrane-spanning segment. Residues 139-159 (DRYLAIVHATRTLARKRYLVK) are Cytoplasmic-facing. A helical membrane pass occupies residues 160-179 (FVCVGIWGLSLILSLPFAIF). Over 180–204 (RQAYKPFRSGTVCYEVLGEATTDFR) the chain is Extracellular. A helical membrane pass occupies residues 205-225 (MTLRGLSHIFGFLLPLLTMLV). The Cytoplasmic segment spans residues 226 to 247 (CYGLTLRMLFKTHMRQKHRAMG). The helical transmembrane segment at 248-269 (VIFAVVLVFLLCCLPYNLVLLS) threads the bilayer. The Extracellular portion of the chain corresponds to 270–290 (DTLLGAHLIEDTCERRNDIDQ). The chain crosses the membrane as a helical span at residues 291–313 (ALYITEILGFSHSCLNPIIYAFV). Residues 314 to 351 (GQNFRHEFLKILANHGLVRKEVLTHRRVAFHTSLTAIY) are Cytoplasmic-facing.

This sequence belongs to the G-protein coupled receptor 1 family. In terms of assembly, interacts with IL8. Interacts with GNAI2.

The protein resides in the cell membrane. In terms of biological role, receptor to interleukin-8, which is a powerful neutrophils chemotactic factor. Binding of IL-8 to the receptor causes activation of neutrophils. This response is mediated via a G-protein that activates a phosphatidylinositol-calcium second messenger system. The chain is C-X-C chemokine receptor type 1 (Cxcr1) from Mus musculus (Mouse).